We begin with the raw amino-acid sequence, 396 residues long: MSFRTLDGLDVRGRRVLVRLDLNVPMRDGRVSDLTRIERQAPTVRELAEGGARVIVMSHFDRPKGKRVQEMSLRPIAEALGAALGQPVAFVDDCIGGTVEEAVAGMKDGDVLVLENTRFHAAEEKNDPEFSRLLASLAEVYVNDAFSAAHRAHASTHGVTAHLPAYAGRLMQREVEALELALGSPTRPVAAIVGGAKVSTKLDLLGNLSTKVDVLVIGGAMANTFLAAQGIKVGKSLQEAEMHDTARAILETAKKAGCEILLPVDAVTATEFRADPPTRTVSINEIPDDAMMLDVGPETVRLLTERLSGVKTLVWNGPLGAFEISPFDKATVALAQSVAGLTETAGLVSVAGGGDTVAALKHAGVVERLTYVSAAGGAFLEWMEGKELPGVAVLRA.

Residues 21 to 23 (DLN), Arg36, 59 to 62 (HFDR), Arg118, and Arg151 contribute to the substrate site. ATP-binding positions include Lys201, Glu323, and 353–356 (GGDT).

This sequence belongs to the phosphoglycerate kinase family. As to quaternary structure, monomer.

Its subcellular location is the cytoplasm. It carries out the reaction (2R)-3-phosphoglycerate + ATP = (2R)-3-phospho-glyceroyl phosphate + ADP. It functions in the pathway carbohydrate degradation; glycolysis; pyruvate from D-glyceraldehyde 3-phosphate: step 2/5. The chain is Phosphoglycerate kinase from Granulibacter bethesdensis (strain ATCC BAA-1260 / CGDNIH1).